The primary structure comprises 335 residues: UPF0353 protein NFA_34780 (335 aa).

A run of 2 helical transmembrane segments spans residues Ala8–Val28 and Ile61–Val81. The VWFA domain occupies Thr90–Leu295. Residues Arg310–Tyr330 form a helical membrane-spanning segment.

Belongs to the UPF0353 family.

It is found in the cell membrane. The sequence is that of UPF0353 protein NFA_34780 from Nocardia farcinica (strain IFM 10152).